A 552-amino-acid polypeptide reads, in one-letter code: MAAKVLKFSHEVLHAMSRGVEVLANAVKVTLGPKGRNVVLDKSFGAPTITKDGVSVAKEIELEDKFENMGAQMVKEVASRTSDDAGDGTTTATVLAQAILVEGIKAVIAGMNPMDLKRGIDKAVTAAVAELKKISKPCKDQKAIAQVGTISANSDKSIGDIIAEAMEKVGKEGVITVEDGSGLENALEVVEGMQFDRGYLSPYFINNQQNMSAELENPFILLVDKKISNIRELIPLLENIAKSGRPLLVIAEDIEGEALATLVVNNIRGVVKVAAVKAPGFGDRRKAMLQDIAVLTGGKVISEEVGLSLEAASLDDLGSAKRVVVTKDDTTIIDGSGDAGDIKNRVEQIRKEIENSSSDYDKEKLQERLAKLAGGVAVIKVGAATEVEMKEKKARVEDALHATRAAVEEGVVPGGGVALIRVLKSLDSVEVENEDQRVGVEIARRAMAYPLSQIVKNTGVQAAVVADKVLNHKDVNYGYNAATGEYGDMIEMGILDPTKVTRTALQNAASIAGLMITTECMVTEAPKKKEESMPGGGDMGGMGGMGGMGGMM.

Residues 30–33 (TLGP), lysine 51, 87–91 (DGTTT), glycine 415, 480–482 (NAA), and aspartate 496 contribute to the ATP site.

It belongs to the chaperonin (HSP60) family. In terms of assembly, forms a cylinder of 14 subunits composed of two heptameric rings stacked back-to-back. Interacts with the co-chaperonin GroES.

It is found in the cytoplasm. It catalyses the reaction ATP + H2O + a folded polypeptide = ADP + phosphate + an unfolded polypeptide.. In terms of biological role, together with its co-chaperonin GroES, plays an essential role in assisting protein folding. The GroEL-GroES system forms a nano-cage that allows encapsulation of the non-native substrate proteins and provides a physical environment optimized to promote and accelerate protein folding. This is Chaperonin GroEL from Coxiella burnetii (strain RSA 331 / Henzerling II).